A 453-amino-acid chain; its full sequence is Collagen alpha-4(IV) chain (453 aa).

The disordered stretch occupies residues 1–218 (GPPGPPGAPG…PPGPMGDPGP (218 aa)). A triple-helical region region spans residues 1-222 (GPPGPPGAPG…MGDPGPIGFG (222 aa)). 3 stretches are compositionally biased toward pro residues: residues 26–44 (QGPPGPDGPRGVPGPPGPP), 60–72 (PGPPGLPGPPGPP), and 95–122 (PQGPPGSPGPPGDKGLPGPPGRRGPLGP). Residues 153 to 162 (PEGTMGLPGM) show a composition bias toward low complexity. Basic and acidic residues predominate over residues 174–183 (PGLDGRRGED). Positions 206–215 (APGPPGPMGD) are enriched in pro residues. In terms of domain architecture, Collagen IV NC1 spans 228-453 (GFLLVLHSQT…SRCQVCVKHS (226 aa)). Intrachain disulfides connect C243–C332, C276–C329, C288–C294, C351–C449, C385–C446, and C397–C404.

Belongs to the type IV collagen family. As to quaternary structure, there are six type IV collagen isoforms, alpha 1(IV)-alpha 6(IV), each of which can form a triple helix structure with 2 other chains to generate type IV collagen network. The alpha 3(IV) chain forms a triple helical protomer with alpha 4(IV) and alpha 5(IV); this triple helical structure dimerizes through NC1-NC1 domain interactions such that the alpha 3(IV), alpha 4(IV) and alpha 5(IV) chains of one protomer connect with the alpha 5(IV), alpha 4(IV) and alpha 3(IV) chains of the opposite protomer, respectively. Associates with LAMB2 at the neuromuscular junction and in GBM. Post-translationally, prolines at the third position of the tripeptide repeating unit (G-X-Y) are hydroxylated in some or all of the chains. Type IV collagens contain numerous cysteine residues which are involved in inter- and intramolecular disulfide bonding. 12 of these, located in the NC1 domain, are conserved in all known type IV collagens. In terms of processing, the trimeric structure of the NC1 domains is stabilized by covalent bonds between Lys and Met residues. As to expression, alpha 3 and alpha 4 type IV collagens are colocalized and present only in basement membranes of kidney, eye, cochlea, lung and brain.

It localises to the secreted. The protein localises to the extracellular space. Its subcellular location is the extracellular matrix. The protein resides in the basement membrane. Functionally, type IV collagen is the major structural component of glomerular basement membranes (GBM), forming a 'chicken-wire' meshwork together with laminins, proteoglycans and entactin/nidogen. The polypeptide is Collagen alpha-4(IV) chain (COL4A4) (Bos taurus (Bovine)).